A 294-amino-acid polypeptide reads, in one-letter code: BOI-related E3 ubiquitin-protein ligase 1 (294 aa).

The segment at L168–L204 is WRD domain. The stretch at R183 to A212 forms a coiled coil. The RING-type zinc-finger motif lies at C244–D281.

Interacts with the DELLA proteins GAI, RGA, RGL1, RGL2 and RGL3.

The enzyme catalyses S-ubiquitinyl-[E2 ubiquitin-conjugating enzyme]-L-cysteine + [acceptor protein]-L-lysine = [E2 ubiquitin-conjugating enzyme]-L-cysteine + N(6)-ubiquitinyl-[acceptor protein]-L-lysine.. The protein operates within protein degradation; proteasomal ubiquitin-dependent pathway. Functionally, E3 ubiquitin-protein ligase involved in regulation of abiotic stress responses. Not involved in ubiquitination of MYB108/BOS1. Has no effect on the stability of the DELLA proteins. In Arabidopsis thaliana (Mouse-ear cress), this protein is BOI-related E3 ubiquitin-protein ligase 1 (BRG1).